Consider the following 516-residue polypeptide: Cilia- and flagella-associated protein 53 (516 aa).

Coiled-coil stretches lie at residues 217–283 and 316–440; these read EEKK…LQVK and MQGY…RQMK. Basic and acidic residues-rich tracts occupy residues 417-436 and 461-472; these read KELL…DRNA and QAEREEEQREFE. Disordered regions lie at residues 417 to 443 and 455 to 475; these read KELL…KVAQ and YQQS…EAGL.

The protein belongs to the CFAP53 family.

Its subcellular location is the cytoplasm. The protein localises to the cytoskeleton. It is found in the cilium axoneme. It localises to the microtubule organizing center. The protein resides in the centrosome. Its subcellular location is the centriolar satellite. Microtubule inner protein (MIP) part of the dynein-decorated doublet microtubules (DMTs) in cilia axoneme, which is required for motile cilia beating. Regulates motility patterns of both 9+0 and 9+2 motile cilia through differential localization and recruitment of axonemal dynein components. Required for motile cilium formation and movement. Involved in the establishment of left-right symmetry during embryogenesis. This chain is Cilia- and flagella-associated protein 53, found in Xenopus laevis (African clawed frog).